We begin with the raw amino-acid sequence, 144 residues long: Maximins z/Hv (144 aa).

Residues Met1 to Ala18 form the signal peptide. Positions Arg19–Arg43 are excised as a propeptide. Asn70 carries the post-translational modification Asparagine amide. The propeptide occupies Thr74–Arg123. Ile143 is modified (isoleucine amide).

Belongs to the bombinin family. In terms of tissue distribution, expressed by the skin glands.

It is found in the secreted. Its function is as follows. Maximin-z shows antimicrobial activity against bacteria and against the fungus C.albicans. It has little hemolytic activity. Functionally, maximin-Hv shows antimicrobial activity against bacteria and against the fungus C.albicans. Shows strong hemolytic activity. The protein is Maximins z/Hv of Bombina maxima (Giant fire-bellied toad).